The chain runs to 274 residues: Hydroxyethylthiazole kinase (274 aa).

Residue Met46 participates in substrate binding. Positions 122 and 173 each coordinate ATP. Substrate is bound at residue Gly200.

It belongs to the Thz kinase family. Requires Mg(2+) as cofactor.

The enzyme catalyses 5-(2-hydroxyethyl)-4-methylthiazole + ATP = 4-methyl-5-(2-phosphooxyethyl)-thiazole + ADP + H(+). It participates in cofactor biosynthesis; thiamine diphosphate biosynthesis; 4-methyl-5-(2-phosphoethyl)-thiazole from 5-(2-hydroxyethyl)-4-methylthiazole: step 1/1. Functionally, catalyzes the phosphorylation of the hydroxyl group of 4-methyl-5-beta-hydroxyethylthiazole (THZ). This chain is Hydroxyethylthiazole kinase, found in Clostridium tetani (strain Massachusetts / E88).